The following is a 188-amino-acid chain: Ribosomal RNA small subunit methyltransferase G (188 aa).

S-adenosyl-L-methionine contacts are provided by residues Gly-69, Phe-74, 119–120 (VQ), and Arg-134.

The protein belongs to the methyltransferase superfamily. RNA methyltransferase RsmG family.

It localises to the cytoplasm. The enzyme catalyses guanosine(527) in 16S rRNA + S-adenosyl-L-methionine = N(7)-methylguanosine(527) in 16S rRNA + S-adenosyl-L-homocysteine. Its function is as follows. Specifically methylates the N7 position of guanine in position 527 of 16S rRNA. This Campylobacter jejuni subsp. jejuni serotype O:2 (strain ATCC 700819 / NCTC 11168) protein is Ribosomal RNA small subunit methyltransferase G.